The chain runs to 239 residues: Orotidine 5'-phosphate decarboxylase (239 aa).

Substrate contacts are provided by residues D11, K33, 60–69 (DLKLHDIPTT), T123, R185, Q194, G214, and R215. Catalysis depends on K62, which acts as the Proton donor.

It belongs to the OMP decarboxylase family. Type 1 subfamily. Homodimer.

The catalysed reaction is orotidine 5'-phosphate + H(+) = UMP + CO2. It functions in the pathway pyrimidine metabolism; UMP biosynthesis via de novo pathway; UMP from orotate: step 2/2. Functionally, catalyzes the decarboxylation of orotidine 5'-monophosphate (OMP) to uridine 5'-monophosphate (UMP). This Bacillus subtilis (strain 168) protein is Orotidine 5'-phosphate decarboxylase (pyrF).